The primary structure comprises 454 residues: tRNA modification GTPase MnmE (454 aa).

(6S)-5-formyl-5,6,7,8-tetrahydrofolate contacts are provided by Arg-23, Glu-80, and Lys-120. In terms of domain architecture, TrmE-type G spans 216 to 377 (GMRVVIAGRP…VREHLKACIG (162 aa)). Position 226 (Asn-226) interacts with K(+). GTP-binding positions include 226–231 (NAGKSS), 245–251 (TEIAGTT), 270–273 (DTAG), and 335–338 (NKAD). Mg(2+) is bound at residue Ser-230. 3 residues coordinate K(+): Thr-245, Ile-247, and Thr-250. Residue Thr-251 coordinates Mg(2+). Lys-454 serves as a coordination point for (6S)-5-formyl-5,6,7,8-tetrahydrofolate.

Belongs to the TRAFAC class TrmE-Era-EngA-EngB-Septin-like GTPase superfamily. TrmE GTPase family. As to quaternary structure, homodimer. Heterotetramer of two MnmE and two MnmG subunits. The cofactor is K(+).

It localises to the cytoplasm. In terms of biological role, exhibits a very high intrinsic GTPase hydrolysis rate. Involved in the addition of a carboxymethylaminomethyl (cmnm) group at the wobble position (U34) of certain tRNAs, forming tRNA-cmnm(5)s(2)U34. The sequence is that of tRNA modification GTPase MnmE from Pseudoalteromonas translucida (strain TAC 125).